Consider the following 264-residue polypeptide: Proliferating cell nuclear antigen (264 aa).

The DNA-binding element occupies 61–80 (RCDRNISMGMNLANMAKMLK).

It belongs to the PCNA family.

It is found in the nucleus. This protein is an auxiliary protein of DNA polymerase delta and is involved in the control of eukaryotic DNA replication by increasing the polymerase's processibility during elongation of the leading strand. The sequence is that of Proliferating cell nuclear antigen (PCNA) from Nicotiana tabacum (Common tobacco).